Consider the following 98-residue polypeptide: MPNIKSAAKRVRQNKVRRLRNKSVRTRFRNVTKQLLKAIEINEEPEKVNELLRLSYSVLDKAAKKGVIHKRQASRRKSRLTAKVKAYLEARSAGSAQS.

Belongs to the bacterial ribosomal protein bS20 family.

In terms of biological role, binds directly to 16S ribosomal RNA. The polypeptide is Small ribosomal subunit protein bS20 (Kosmotoga olearia (strain ATCC BAA-1733 / DSM 21960 / TBF 19.5.1)).